We begin with the raw amino-acid sequence, 399 residues long: Enoyl-[acyl-carrier-protein] reductase [NADH] (399 aa).

Residues 48 to 53 (GASTGY), 74 to 75 (FE), 111 to 112 (DA), and 139 to 140 (LA) contribute to the NAD(+) site. Tyr-225 provides a ligand contact to substrate. Tyr-235 (proton donor) is an active-site residue. NAD(+) is bound by residues Lys-244 and 273 to 275 (VVT).

The protein belongs to the TER reductase family. Monomer.

The catalysed reaction is a 2,3-saturated acyl-[ACP] + NAD(+) = a (2E)-enoyl-[ACP] + NADH + H(+). The protein operates within lipid metabolism; fatty acid biosynthesis. Its function is as follows. Involved in the final reduction of the elongation cycle of fatty acid synthesis (FAS II). Catalyzes the reduction of a carbon-carbon double bond in an enoyl moiety that is covalently linked to an acyl carrier protein (ACP). The chain is Enoyl-[acyl-carrier-protein] reductase [NADH] from Serratia proteamaculans (strain 568).